Here is a 302-residue protein sequence, read N- to C-terminus: Gamma-gliadin (302 aa).

The N-terminal stretch at 1 to 19 (MKTLLILTILAMATTIATA) is a signal peptide. The disordered stretch occupies residues 27-159 (GQVQWPQQQP…QSFPQQQQPA (133 aa)). Positions 42 to 102 (QPFCQQPQRT…PQPQQTFPQQ (61 aa)) are enriched in low complexity. Residues 103–124 (PQLPFPQQPQQPFPQPQQPQQP) show a composition bias toward pro residues. The segment covering 125–159 (FPQSQQPQQPFPQPQQQFPQPQQPQQSFPQQQQPA) has biased composition (low complexity).

This sequence belongs to the gliadin/glutenin family.

Functionally, gliadin is the major seed storage protein in wheat. In Triticum aestivum (Wheat), this protein is Gamma-gliadin.